Reading from the N-terminus, the 143-residue chain is Small ribosomal subunit protein uS12 (143 aa).

The segment covering 1-19 has biased composition (basic residues); that stretch reads MGKPRGLRTARKHVNHRRD. Residues 1–23 form a disordered region; that stretch reads MGKPRGLRTARKHVNHRRDQRWA. Proline 62 bears the 3-hydroxyproline mark.

It belongs to the universal ribosomal protein uS12 family. Component of the 40S small ribosomal subunit. Post-translationally, hydroxylation at Pro-62 affects translation termination efficiency.

It is found in the cytoplasm. The protein localises to the cytosol. It localises to the rough endoplasmic reticulum. The polypeptide is Small ribosomal subunit protein uS12 (RpS23) (Drosophila melanogaster (Fruit fly)).